Consider the following 408-residue polypeptide: Eukaryotic initiation factor 4A-II (408 aa).

The interval 1–22 (MSGGSADYNSREHGGPEGMDPD) is disordered. Positions 34-62 (DNFDDMNLKESLLRGIYAYGFEKPSAIQQ) match the Q motif motif. The Helicase ATP-binding domain occupies 65–236 (IIPCIKGYDV…KKFMRDPIRI (172 aa)). 77–84 (QAQSGTGK) lines the ATP pocket. Threonine 160 is modified (phosphothreonine). Residues 183 to 186 (LDEA) carry the DEAD box motif. The Helicase C-terminal domain occupies 247 to 408 (GIKQFYINVE…EMPMNVADLI (162 aa)).

This sequence belongs to the DEAD box helicase family. eIF4A subfamily. As to quaternary structure, eIF4F is a multi-subunit complex, the composition of which varies with external and internal environmental conditions. It is composed of at least EIF4A, EIF4E and EIF4G1/EIFFG3. Interacts with EIF4E. May interact with NOM1.

The enzyme catalyses ATP + H2O = ADP + phosphate + H(+). Functionally, ATP-dependent RNA helicase which is a subunit of the eIF4F complex involved in cap recognition and is required for mRNA binding to ribosome. In the current model of translation initiation, eIF4A unwinds RNA secondary structures in the 5'-UTR of mRNAs which is necessary to allow efficient binding of the small ribosomal subunit, and subsequent scanning for the initiator codon. This is Eukaryotic initiation factor 4A-II (EIF4A2) from Macaca fascicularis (Crab-eating macaque).